An 89-amino-acid polypeptide reads, in one-letter code: Large ribosomal subunit protein bL27 (89 aa).

A disordered region spans residues 1 to 26 (MATKKAGGSSKNGRDSAGRRLGLKKT).

Belongs to the bacterial ribosomal protein bL27 family.

This is Large ribosomal subunit protein bL27 from Orientia tsutsugamushi (strain Boryong) (Rickettsia tsutsugamushi).